The chain runs to 193 residues: Large ribosomal subunit protein eL19B (193 aa).

The disordered stretch occupies residues 157 to 179 (EQQDARRARAKAARQRRAKAVEE). Residues 164-174 (ARAKAARQRRA) show a composition bias toward basic residues.

Belongs to the eukaryotic ribosomal protein eL19 family. As to quaternary structure, component of the large ribosomal subunit (LSU). Mature yeast ribosomes consist of a small (40S) and a large (60S) subunit. The 40S small subunit contains 1 molecule of ribosomal RNA (18S rRNA) and at least 33 different proteins. The large 60S subunit contains 3 rRNA molecules (25S, 5.8S and 5S rRNA) and at least 46 different proteins. eL19 lies in close proximity to the binding site for eukaryotic initiation factor eIF4G.

It localises to the cytoplasm. In terms of biological role, component of the ribosome, a large ribonucleoprotein complex responsible for the synthesis of proteins in the cell. The small ribosomal subunit (SSU) binds messenger RNAs (mRNAs) and translates the encoded message by selecting cognate aminoacyl-transfer RNA (tRNA) molecules. The large subunit (LSU) contains the ribosomal catalytic site termed the peptidyl transferase center (PTC), which catalyzes the formation of peptide bonds, thereby polymerizing the amino acids delivered by tRNAs into a polypeptide chain. The nascent polypeptides leave the ribosome through a tunnel in the LSU and interact with protein factors that function in enzymatic processing, targeting, and the membrane insertion of nascent chains at the exit of the ribosomal tunnel. eL19 may play a role in the last stages of translation initiation, in particular subunit joining and shedding/releasing factors. This chain is Large ribosomal subunit protein eL19B (rpl1902), found in Schizosaccharomyces pombe (strain 972 / ATCC 24843) (Fission yeast).